The following is a 2177-amino-acid chain: Brefeldin A-inhibited guanine nucleotide-exchange protein 3 (2177 aa).

Residues 282-295 (TSSTSTSLESDSAS) show a composition bias toward low complexity. Residues 282–301 (TSSTSTSLESDSASPGVSDH) form a disordered region. Position 471 is a phosphoserine (serine 471). Residues 511-524 (TGQTTLEGELGQTT) show a composition bias toward polar residues. Disordered regions lie at residues 511–542 (TGQTTLEGELGQTTPEDHSGNHKNSLKSPAIP), 617–636 (AAEKDSGRSDVSDIGSDNCS), and 1031–1076 (DGAS…LSTA). Residues 583–796 (RTRSYGSRYS…EELYHQVLDR (214 aa)) enclose the SEC7 domain. Over residues 618-627 (AEKDSGRSDV) the composition is skewed to basic and acidic residues. Residues serine 632 and serine 636 each carry the phosphoserine modification. Residues 1032–1047 (GASQPPLTISQPQKAT) are compositionally biased toward polar residues. Serine 1049 is modified (phosphoserine). The helical transmembrane segment at 1492–1512 (GPGFGIYAVVHLLLPVMSVWL) threads the bilayer. 3 disordered regions span residues 1848 to 1877 (STDSSQQCSSEDEDIFEETAQVSPPRGKEK), 1946 to 2004 (ESST…RKKE), and 2033 to 2064 (KQQHNLSAFPKEVKVEKKGEPLGPRGQDSPLL). The span at 1960–1974 (TPSEDDRSQSREHMG) shows a compositional bias: basic and acidic residues. At serine 1991 the chain carries Phosphoserine. 2 stretches are compositionally biased toward basic and acidic residues: residues 1993–2004 (KVEKKDPSRKKE) and 2043–2052 (KEVKVEKKGE). Phosphoserine occurs at positions 2079, 2081, 2095, 2101, and 2103. The segment at 2082–2103 (AGPELLRQDKRPRSGSTGSSLS) is disordered.

Interacts with PHB2. Expressed in breast cancer cell lines. Not expressed in normal tissues such as duct, mammary gland, lung, heart, liver, kidnay, bone marrow.

It is found in the cytoplasm. The protein localises to the cytoplasmic vesicle. The protein resides in the secretory vesicle. It localises to the secretory vesicle membrane. Functionally, participates in the regulation of systemic glucose homeostasis, where it negatively regulates insulin granule biogenesis in pancreatic islet beta cells. Also regulates glucagon granule production in pancreatic alpha cells. Inhibits nuclear translocation of the transcriptional coregulator PHB2 and may enhance estrogen receptor alpha (ESR1) transcriptional activity in breast cancer cells. The protein is Brefeldin A-inhibited guanine nucleotide-exchange protein 3 of Homo sapiens (Human).